The chain runs to 90 residues: U7-theraphotoxin-Hhn1a 4 (90 aa).

The N-terminal stretch at 1–19 (MKTAIFTVVLALAVFAVLS) is a signal peptide. Residues 20–50 (FGWEANEEALSEEFTELIHEKEAASETEARE) constitute a propeptide that is removed on maturation. Cystine bridges form between cysteine 51-cysteine 65, cysteine 58-cysteine 70, and cysteine 64-cysteine 81.

It belongs to the neurotoxin 10 (Hwtx-1) family. 13 (Hntx-13) subfamily. In terms of tissue distribution, expressed by the venom gland.

The protein localises to the secreted. Functionally, ion channel inhibitor. This Cyriopagopus hainanus (Chinese bird spider) protein is U7-theraphotoxin-Hhn1a 4.